A 187-amino-acid chain; its full sequence is WETCKEFLKLSQLEIPQDGTSALRESSPEESHALRKKYGGFMKRYGGFMKKMDELYPQEPEEEAPAEILAKRYGGFMKKDAEEEEDALASSSDLLKELLGPGETETAAAPRGRDDEDVSKSHGGFMRALKGSPQLAQEAKMLQKRYGGFMRRVGRPEWWMDYQKRYGGFLKRFADSLPSDEEGESYS.

Propeptides lie at residues 52–70, 80–143, 153–163, and 173–187; these read MDEL…EILA, DAEE…KMLQ, VGRPEWWMDYQ, and FADS…ESYS. Residues 81 to 132 form a disordered region; it reads AEEEEDALASSSDLLKELLGPGETETAAAPRGRDDEDVSKSHGGFMRALKGS. Residues 88–99 show a composition bias toward low complexity; it reads LASSSDLLKELL. Basic and acidic residues predominate over residues 111-120; the sequence is RGRDDEDVSK. Serine 187 carries the phosphoserine modification.

This sequence belongs to the opioid neuropeptide precursor family. Processed and degraded by ACE. Post-translationally, the N-terminal domain contains 6 conserved cysteines thought to be involved in disulfide bonding and/or processing. In terms of processing, proenkephalin-A is cleaved by CTSL to generate Met-enkephalin.

The protein localises to the cytoplasmic vesicle. It localises to the secretory vesicle. The protein resides in the chromaffin granule lumen. Its subcellular location is the secreted. Its function is as follows. Neuropeptide that competes with and mimic the effects of opiate drugs. They play a role in a number of physiologic functions, including pain perception and responses to stress. The chain is Proenkephalin-A (PENK) from Felis catus (Cat).